Consider the following 77-residue polypeptide: uncharacterized protein (77 aa).

This is an uncharacterized protein from Rickettsia prowazekii (strain Madrid E).